Consider the following 881-residue polypeptide: Serine/threonine-protein phosphatase BSL1 (881 aa).

3 Kelch repeats span residues 60–109 (GSSS…AVGT), 269–320 (RLHV…DQDP), and 338–385 (RIYV…PRFS). Disordered stretches follow at residues 368–407 (SPLL…LSLD) and 436–464 (AGTL…ANEG). Polar residues-rich tracts occupy residues 374-383 (DRTQQSSTPR) and 445-460 (TSDA…TDGT). The residue at position 491 (Ser491) is a Phosphoserine. The interval 503–522 (VPMNNSDVPQPTKKFTRQKS) is disordered. Mn(2+) contacts are provided by Asp584, His586, Asp618, and Asn650. His651 functions as the Proton donor in the catalytic mechanism. His703 and His782 together coordinate Mn(2+). Positions 837–881 (ILSPENSPEHSGDDAWMQELNIQRPPTPTRGRPQPDFDRSSLAYI) are disordered. Phosphoserine is present on Ser839.

It belongs to the PPP phosphatase family. BSU subfamily. In terms of assembly, interacts with CDG1 and CDL1. Requires Mn(2+) as cofactor. As to expression, expressed in mature cauline leaves and at the tip of influorescence, including flowers. Expressed at lower level in young tissues relative to older ones.

Its subcellular location is the nucleus. It carries out the reaction O-phospho-L-seryl-[protein] + H2O = L-seryl-[protein] + phosphate. The enzyme catalyses O-phospho-L-threonyl-[protein] + H2O = L-threonyl-[protein] + phosphate. Functionally, phosphatase involved in elongation process, probably by acting as a regulator of brassinolide signaling. This is Serine/threonine-protein phosphatase BSL1 (BSL1) from Arabidopsis thaliana (Mouse-ear cress).